A 1100-amino-acid chain; its full sequence is ATP-dependent DNA helicase mph1 (1100 aa).

A compositionally biased stretch (acidic residues) spans 1-21 (MSDSDDYLQDDPDDQAFDDFA). Residues 1 to 250 (MSDSDDYLQD…RPSSFMQSSN (250 aa)) are disordered. A compositionally biased stretch (low complexity) spans 38–61 (RNQTRNTTSRRNEDNSVASDSDSF). Basic and acidic residues predominate over residues 84 to 94 (FADHPENEASS). The span at 104–117 (NNPQENIFVTQLTQ) shows a compositional bias: polar residues. Positions 135 to 146 (PPPPPPPAPTKP) are enriched in pro residues. Composition is skewed to polar residues over residues 182 to 191 (RLSFSTAQNS) and 200 to 209 (NAPTNTAQTE). Residues 212 to 223 (DFLDDIPDDAFD) show a composition bias toward acidic residues. Residues 237–249 (SNSSRPSSFMQSS) are compositionally biased toward low complexity. The Helicase ATP-binding domain maps to 317-485 (ITQKGLFHNL…AVIDGLEISK (169 aa)). 330-337 (LPTGLGKT) lines the ATP pocket. A DEAH box motif is present at residues 433–436 (DEAH). A Helicase C-terminal domain is found at 655 to 829 (YLKQVVLNHF…GTRFTFHDDK (175 aa)). Disordered stretches follow at residues 850–913 (PEEN…PEPV) and 1003–1100 (RRPA…LGRR). Composition is skewed to basic residues over residues 863–875 (RRGR…PKKF) and 1019–1028 (GNKKRLRKGR). Positions 1053-1066 (QPISPEQLLSSFTD) are enriched in polar residues. Acidic residues predominate over residues 1082 to 1092 (LELDADFEAPD).

The protein belongs to the DEAD box helicase family. DEAH subfamily. FANCM sub-subfamily. As to quaternary structure, interacts with the MHF histone-fold complex to form the FANCM-MHF complex.

It localises to the nucleus. It carries out the reaction ATP + H2O = ADP + phosphate + H(+). Its function is as follows. ATP-dependent DNA helicase involved in DNA damage repair by homologous recombination and in genome maintenance. Capable of unwinding D-loops. Plays a role in limiting crossover recombinants during mitotic DNA double-strand break (DSB) repair. Component of a FANCM-MHF complex which promotes gene conversion at blocked replication forks, probably by reversal of the stalled fork. This Aspergillus terreus (strain NIH 2624 / FGSC A1156) protein is ATP-dependent DNA helicase mph1.